We begin with the raw amino-acid sequence, 154 residues long: 3-hydroxyacyl-[acyl-carrier-protein] dehydratase FabZ (154 aa).

H60 is a catalytic residue.

It belongs to the thioester dehydratase family. FabZ subfamily.

The protein resides in the cytoplasm. The catalysed reaction is a (3R)-hydroxyacyl-[ACP] = a (2E)-enoyl-[ACP] + H2O. Its function is as follows. Involved in unsaturated fatty acids biosynthesis. Catalyzes the dehydration of short chain beta-hydroxyacyl-ACPs and long chain saturated and unsaturated beta-hydroxyacyl-ACPs. The sequence is that of 3-hydroxyacyl-[acyl-carrier-protein] dehydratase FabZ from Haemophilus ducreyi (strain 35000HP / ATCC 700724).